A 212-amino-acid polypeptide reads, in one-letter code: Large ribosomal subunit protein uL1 (212 aa).

Belongs to the universal ribosomal protein uL1 family. In terms of assembly, part of the 50S ribosomal subunit.

Its function is as follows. Binds directly to 23S rRNA. Probably involved in E site tRNA release. Functionally, protein L1 is also a translational repressor protein, it controls the translation of its operon by binding to its mRNA. The polypeptide is Large ribosomal subunit protein uL1 (Haloarcula marismortui (strain ATCC 43049 / DSM 3752 / JCM 8966 / VKM B-1809) (Halobacterium marismortui)).